The chain runs to 721 residues: Nitrogen permease regulator 3 (721 aa).

The N-terminal stretch at 1–21 is a signal peptide; sequence MSYNLPNPSLIGILLIISTHS. 2 disordered regions span residues 27 to 54 and 555 to 614; these read YKQP…ETES and DLEN…NINA. The segment covering 37–54 has biased composition (acidic residues); that stretch reads PDEDEGEYDQEDIAETES.

The protein belongs to the NPR3 family.

Mediates inactivation of the TORC1 complex in response to amino acid starvation. Required for meiotic nuclear division. In Scheffersomyces stipitis (strain ATCC 58785 / CBS 6054 / NBRC 10063 / NRRL Y-11545) (Yeast), this protein is Nitrogen permease regulator 3 (NPR3).